The sequence spans 511 residues: Protein phosphatase 2C 16 (511 aa).

An N-terminal signal peptide occupies residues Met-1–Ser-22. Residues Leu-189–Leu-501 enclose the PPM-type phosphatase domain. Residues Asp-243, Gly-244, Asp-432, and Asp-492 each coordinate Mn(2+).

Belongs to the PP2C family. Interacts with SWI3B (via N-terminus). Interacts with ABA-bounded PYR1, PYL1, PYL2, PYL3, PYL4, PYL5, PYL6, PYL8 and PYL9, and with free PYL2, PYL3, PYL4, PYL10 and PYL13. It depends on Mg(2+) as a cofactor. Mn(2+) is required as a cofactor. As to expression, expressed in seeds, roots, stems, leaves and flowers, especially in meristematic tissues, guard cells, embryo and siliques.

The protein resides in the cytoplasm. It is found in the nucleus. It catalyses the reaction O-phospho-L-seryl-[protein] + H2O = L-seryl-[protein] + phosphate. The catalysed reaction is O-phospho-L-threonyl-[protein] + H2O = L-threonyl-[protein] + phosphate. With respect to regulation, repressed by PYR/PYL/RCAR ABA receptors in an ABA-dependent manner. Key component and repressor of the abscisic acid (ABA) signaling pathway that regulates numerous ABA responses, such as stomatal closure, seed germination and inhibition of vegetative growth. Confers enhanced sensitivity to drought. In Arabidopsis thaliana (Mouse-ear cress), this protein is Protein phosphatase 2C 16 (HAB1).